The following is a 693-amino-acid chain: MSEGRCSVAHMSSVVAPAKEANAMGPKAVELVLVKEQNGVQLTNSTLLNPPQSPTEAQDRETWSKKADFLLSVIGFAVDLANVWRFPYLCYKNGGGAFLVPYLFFMVVAGVPLFYMELALGQFNREGAAGVWKICPILRGVGYTAILISLYIGFFYNVIIAWALHYLLSSFTTELPWTHCNHSWNSPRCSDARAPNASSGPNGTSRTTPAAEYFERGVLHLHESQGIDDLGPPRWQLTSCLVLVIVLLYFSLWKGVKTSGKVVWITATMPYVVLFALLLRGITLPGAVDAIRAYLSVDFHRLCEASVWIDAAIQICFSLGVGLGVLIAFSSYNKFTNNCYRDAIITTSVNSLTSFSSGFVVFSFLGYMAQKHSVPIGDVAKDGPGLIFIIYPEALATLPLSSVWAVVFFVMLLTLGIDSAMGGMESVITGLADEFQLLHRHRELFTLLVVLATFLLSLFCVTNGGIYVFTLLDHFAAGTSILFGVLMEVIGVAWFYGVWQFSDDIKQMTGRRPSLYWRLCWKFVSPCFLLFVVVVSIATFRPPHYGAYVFPEWATALGWAIAASSMSVVPIYAAYKLCSLPGSSREKLAYAITPETEHGRVDSGGGAPVHAPPLARGVGRWRKRKSCWVPSRGPGRGGPPTPSPRLAGHTRAFPWTGAPPVPRELTPPSTCRCVPPLVCAHPAVESTGLCSVY.

The Cytoplasmic portion of the chain corresponds to 1 to 56; sequence MSEGRCSVAHMSSVVAPAKEANAMGPKAVELVLVKEQNGVQLTNSTLLNPPQSPTE. Residues 57–95 traverse the membrane as a discontinuously helical segment; sequence AQDRETWSKKADFLLSVIGFAVDLANVWRFPYLCYKNGG. Positions 75, 77, 78, 79, and 82 each coordinate Na(+). Residue Asp-79 participates in dopamine binding. A run of 2 helical transmembrane segments spans residues 96–127 and 128–171; these read GAFL…NREG and AAGV…LSSF. Dopamine contacts are provided by Ser-149 and Gly-153. The Extracellular portion of the chain corresponds to 172-233; sequence TTELPWTHCN…SQGIDDLGPP (62 aa). Residues Cys-180 and Cys-189 are joined by a disulfide bond. N-linked (GlcNAc...) asparagine glycosylation is found at Asn-181, Asn-196, and Asn-202. The next 2 membrane-spanning stretches (helical) occupy residues 234 to 253 and 254 to 284; these read RWQL…FSLW and KGVK…GITL. Topologically, residues 285 to 303 are extracellular; sequence PGAVDAIRAYLSVDFHRLC. Residues 304 to 332 form a discontinuously helical membrane-spanning segment; the sequence is EASVWIDAAIQICFSLGVGLGVLIAFSSY. Gln-314 contributes to the chloride binding site. Phe-317 serves as a coordination point for dopamine. Na(+)-binding residues include Ser-318 and Asn-350. Ser-318 contributes to the chloride binding site. The chain crosses the membrane as a helical span at residues 333-373; sequence NKFTNNCYRDAIITTSVNSLTSFSSGFVVFSFLGYMAQKHS. Ser-354 provides a ligand contact to chloride. Residues 374 to 397 lie on the Extracellular side of the membrane; that stretch reads VPIGDVAKDGPGLIFIIYPEALAT. The next 3 membrane-spanning stretches (helical) occupy residues 398 to 439, 440 to 463, and 464 to 496; these read LPLS…QLLH, RHRE…CVTN, and GGIY…AWFY. The Na(+) site is built by Leu-415, Asp-418, and Ser-419. Dopamine contacts are provided by Ser-419 and Ala-420. Topologically, residues 497–513 are cytoplasmic; it reads GVWQFSDDIKQMTGRRP. Residues 514-539 traverse the membrane as a helical segment; sequence SLYWRLCWKFVSPCFLLFVVVVSIAT. Over 540 to 550 the chain is Extracellular; it reads FRPPHYGAYVF. The chain crosses the membrane as a helical span at residues 551-580; that stretch reads PEWATALGWAIAASSMSVVPIYAAYKLCSL. Residues 558 to 587 form an interaction with TGFB1I1 region; the sequence is GWAIAASSMSVVPIYAAYKLCSLPGSSREK. Residues 581-693 lie on the Cytoplasmic side of the membrane; sequence PGSSREKLAY…VESTGLCSVY (113 aa).

Belongs to the sodium:neurotransmitter symporter (SNF) (TC 2.A.22) family. SLC6A3 subfamily. As to quaternary structure, monomer. Homooligomer; disulfide-linked. Interacts with PRKCABP and TGFB1I1. Interacts (via N-terminus) with SYNGR3 (via N-terminus). Interacts with SLC18A2. Interacts with TOR1A (ATP-bound); TOR1A regulates SLC6A3 subcellular location. Interacts with alpha-synuclein/SNCA. Interacts with SEPTIN4. Expressed in the neurons of the substantia nigra of the brain.

The protein localises to the cell membrane. It localises to the cell projection. The protein resides in the neuron projection. It is found in the axon. It carries out the reaction dopamine(out) + chloride(out) + Na(+)(out) = dopamine(in) + chloride(in) + Na(+)(in). It catalyses the reaction (R)-noradrenaline(out) + chloride(out) + Na(+)(out) = (R)-noradrenaline(in) + chloride(in) + Na(+)(in). The enzyme catalyses dopamine(out) + chloride(out) + 2 Na(+)(out) = dopamine(in) + chloride(in) + 2 Na(+)(in). With respect to regulation, inhibited by GBR 12909 dihydrochloride, amphetamine and cocaine. Inhibited by zinc ions. Mediates sodium- and chloride-dependent transport of dopamine. Also mediates sodium- and chloride-dependent transport of norepinephrine (also known as noradrenaline). Regulator of light-dependent retinal hyaloid vessel regression, downstream of OPN5 signaling. The chain is Sodium-dependent dopamine transporter (SLC6A3) from Bos taurus (Bovine).